The primary structure comprises 369 residues: tRNA 2-selenouridine synthase (369 aa).

In terms of domain architecture, Rhodanese spans Phe-15–Glu-138. Cys-98 functions as the S-selanylcysteine intermediate in the catalytic mechanism.

Belongs to the SelU family. Monomer.

It carries out the reaction 5-methylaminomethyl-2-thiouridine(34) in tRNA + selenophosphate + (2E)-geranyl diphosphate + H2O + H(+) = 5-methylaminomethyl-2-selenouridine(34) in tRNA + (2E)-thiogeraniol + phosphate + diphosphate. It catalyses the reaction 5-methylaminomethyl-2-thiouridine(34) in tRNA + (2E)-geranyl diphosphate = 5-methylaminomethyl-S-(2E)-geranyl-thiouridine(34) in tRNA + diphosphate. The enzyme catalyses 5-methylaminomethyl-S-(2E)-geranyl-thiouridine(34) in tRNA + selenophosphate + H(+) = 5-methylaminomethyl-2-(Se-phospho)selenouridine(34) in tRNA + (2E)-thiogeraniol. The catalysed reaction is 5-methylaminomethyl-2-(Se-phospho)selenouridine(34) in tRNA + H2O = 5-methylaminomethyl-2-selenouridine(34) in tRNA + phosphate. Functionally, involved in the post-transcriptional modification of the uridine at the wobble position (U34) of tRNA(Lys), tRNA(Glu) and tRNA(Gln). Catalyzes the conversion of 2-thiouridine (S2U-RNA) to 2-selenouridine (Se2U-RNA). Acts in a two-step process involving geranylation of 2-thiouridine (S2U) to S-geranyl-2-thiouridine (geS2U) and subsequent selenation of the latter derivative to 2-selenouridine (Se2U) in the tRNA chain. The sequence is that of tRNA 2-selenouridine synthase from Shewanella sp. (strain W3-18-1).